The following is a 325-amino-acid chain: Probable cell division protein WhiA (325 aa).

A DNA-binding region (H-T-H motif) is located at residues 280–313 (SLKELGSMLKNPLGKSGVNHRLRKIDKIAEELRK).

Belongs to the WhiA family.

In terms of biological role, involved in cell division and chromosome segregation. The sequence is that of Probable cell division protein WhiA from Caldicellulosiruptor saccharolyticus (strain ATCC 43494 / DSM 8903 / Tp8T 6331).